We begin with the raw amino-acid sequence, 345 residues long: MNHSIAMGNLEDLVNAAIKLFDNAESIVDLEQIKAQYLGKTGEITILLKGLRELTPEERPVMGERINQAKKLLEDALIERRNLIQEKNMSARLAEESLDVSLPGRGLGMGGVHPVTRTLIRIESLFHSIGFGVATGPEIETDFYNFTALNIAENHPARAMHDTFYVDGGKLLRTHTSPVQIHYMQNHRPPIKIIAPGRVYRCDSDVTHTPMFHQVEGLWIDENVSFSALKGVLVEFMRNFFEKDNLSVRFRPSFFPFTEPSAEMDIACVMCNGKGCRVCGETGWLEVLGCGMVHPNVMNHVGLDSEEHIGFAFGLGVERLAMLRYGVNDLRLFFENDLRFLKQFN.

Position 259 (glutamate 259) interacts with Mg(2+).

This sequence belongs to the class-II aminoacyl-tRNA synthetase family. Phe-tRNA synthetase alpha subunit type 1 subfamily. As to quaternary structure, tetramer of two alpha and two beta subunits. Requires Mg(2+) as cofactor.

The protein resides in the cytoplasm. The enzyme catalyses tRNA(Phe) + L-phenylalanine + ATP = L-phenylalanyl-tRNA(Phe) + AMP + diphosphate + H(+). This chain is Phenylalanine--tRNA ligase alpha subunit, found in Nitrosomonas europaea (strain ATCC 19718 / CIP 103999 / KCTC 2705 / NBRC 14298).